Consider the following 201-residue polypeptide: Alanine--tRNA ligase (201 aa).

It belongs to the class-II aminoacyl-tRNA synthetase family. The cofactor is Zn(2+).

It localises to the cytoplasm. The catalysed reaction is tRNA(Ala) + L-alanine + ATP = L-alanyl-tRNA(Ala) + AMP + diphosphate. In terms of biological role, catalyzes the attachment of alanine to tRNA(Ala) in a two-step reaction: alanine is first activated by ATP to form Ala-AMP and then transferred to the acceptor end of tRNA(Ala). Also edits incorrectly charged Ser-tRNA(Ala) and Gly-tRNA(Ala) via its editing domain. This Rhizobium leguminosarum bv. viciae protein is Alanine--tRNA ligase (alaS).